The following is a 571-amino-acid chain: Isocitrate dehydrogenase kinase/phosphatase 2 (571 aa).

Residues Ala313–Met319 and Lys334 contribute to the ATP site. The active site involves Asp369.

Belongs to the AceK family.

The protein localises to the cytoplasm. The enzyme catalyses L-seryl-[isocitrate dehydrogenase] + ATP = O-phospho-L-seryl-[isocitrate dehydrogenase] + ADP + H(+). Its function is as follows. Bifunctional enzyme which can phosphorylate or dephosphorylate isocitrate dehydrogenase (IDH) on a specific serine residue. This is a regulatory mechanism which enables bacteria to bypass the Krebs cycle via the glyoxylate shunt in response to the source of carbon. When bacteria are grown on glucose, IDH is fully active and unphosphorylated, but when grown on acetate or ethanol, the activity of IDH declines drastically concomitant with its phosphorylation. The polypeptide is Isocitrate dehydrogenase kinase/phosphatase 2 (Pseudoalteromonas translucida (strain TAC 125)).